The primary structure comprises 751 residues: Glutamate carboxypeptidase 2 (751 aa).

Topologically, residues 1 to 19 (MWNPLHETDSTSVAWRRPR) are cytoplasmic. Ser-10 is modified (phosphoserine). Residues 20 to 43 (WLCAGALVLAAGLFVLGFLFGWFI) traverse the membrane as a helical; Signal-anchor for type II membrane protein segment. Topologically, residues 44 to 750 (KSPNEAANIS…QAAAGTLREV (707 aa)) are extracellular. N-linked (GlcNAc...) asparagine glycans are attached at residues Asn-51, Asn-77, Asn-122, Asn-141, Asn-154, and Asn-196. Substrate-binding residues include Arg-211 and Asn-258. Residues Thr-270 and Tyr-273 each coordinate Ca(2+). The NAALADase stretch occupies residues 275–588 (ANEYAYRLQI…QVRGGIVFEL (314 aa)). A glycan (N-linked (GlcNAc...) asparagine) is linked at Asn-337. Zn(2+)-binding residues include His-378 and Asp-388. Residue Glu-425 participates in substrate binding. Glu-425 functions as the Nucleophile; for NAALADase activity in the catalytic mechanism. Residue Glu-426 coordinates Zn(2+). Ca(2+)-binding residues include Glu-434 and Glu-437. Asp-454 is a Zn(2+) binding site. N-linked (GlcNAc...) asparagine glycosylation is found at Asn-460 and Asn-477. Substrate-binding positions include 518–519 (SG), Asn-520, 535–537 (RAR), Tyr-553, and 553–554 (YH). His-554 is a binding site for Zn(2+). N-linked (GlcNAc...) asparagine glycosylation occurs at Asn-614. Catalysis depends on Ser-629, which acts as the Charge relay system. Asn-639 and Asn-646 each carry an N-linked (GlcNAc...) asparagine glycan. Active-site charge relay system residues include Asp-667 and His-690. Position 700-701 (700-701 (KY)) interacts with substrate.

The protein belongs to the peptidase M28 family. M28B subfamily. Homodimer. Requires Zn(2+) as cofactor. As to expression, high expression in the duodenum and in the jejunum brush-border membrane. Weak expression in kidney.

The protein localises to the cell membrane. The enzyme catalyses Release of an unsubstituted, C-terminal glutamyl residue, typically from Ac-Asp-Glu or folylpoly-gamma-glutamates.. The NAALADase activity is inhibited by quisqualic acid, beta-NAAG and 2-(phosphonomethyl) pentanedioic acid (PMPA). Ethanol ingestion decreases the folate hydrolase activity by 50%. Functionally, has both folate hydrolase and N-acetylated-alpha-linked-acidic dipeptidase (NAALADase) activity. Has a preference for tri-alpha-glutamate peptides. In the intestine, required for the uptake of folate. In the brain, modulates excitatory neurotransmission through the hydrolysis of the neuropeptide, N-aceylaspartylglutamate (NAAG), thereby releasing glutamate. Its function is as follows. Also exhibits a dipeptidyl-peptidase IV type activity. In vitro, cleaves Gly-Pro-AMC. This Sus scrofa (Pig) protein is Glutamate carboxypeptidase 2 (FOLH1).